A 99-amino-acid chain; its full sequence is Small ribosomal subunit protein uS14c (99 aa).

Belongs to the universal ribosomal protein uS14 family. In terms of assembly, part of the 30S ribosomal subunit.

It is found in the plastid. The protein localises to the chloroplast. Its function is as follows. Binds 16S rRNA, required for the assembly of 30S particles. The polypeptide is Small ribosomal subunit protein uS14c (Welwitschia mirabilis (Tree tumbo)).